Here is a 239-residue protein sequence, read N- to C-terminus: LexA repressor (239 aa).

Positions 26-46 (FDEMKDALDLASKSGIHRLIT) form a DNA-binding region, H-T-H motif. Catalysis depends on for autocatalytic cleavage activity residues serine 159 and lysine 197.

Belongs to the peptidase S24 family. In terms of assembly, homodimer.

It carries out the reaction Hydrolysis of Ala-|-Gly bond in repressor LexA.. Represses a number of genes involved in the response to DNA damage (SOS response), including recA and lexA. In the presence of single-stranded DNA, RecA interacts with LexA causing an autocatalytic cleavage which disrupts the DNA-binding part of LexA, leading to derepression of the SOS regulon and eventually DNA repair. This is LexA repressor from Rhizobium etli (strain CIAT 652).